We begin with the raw amino-acid sequence, 492 residues long: Catalase-1 (492 aa).

Catalysis depends on residues His-65 and Asn-138. A heme-binding site is contributed by Tyr-348.

Belongs to the catalase family. In terms of assembly, homotetramer and heterotetramer. At least six or seven isozymes are produced from a mixture of 3 gene products. Interacts with NCA1. Interacts with LSD1. The cofactor is heme.

It is found in the cytoplasm. The enzyme catalyses 2 H2O2 = O2 + 2 H2O. Its function is as follows. Occurs in almost all aerobically respiring organisms and serves to protect cells from the toxic effects of hydrogen peroxide. The polypeptide is Catalase-1 (CAT1) (Arabidopsis thaliana (Mouse-ear cress)).